The sequence spans 77 residues: Acyl carrier protein (77 aa).

One can recognise a Carrier domain in the interval 2-77 (SDVAEKVKKI…DAIAYIEEKK (76 aa)). Residue Ser37 is modified to O-(pantetheine 4'-phosphoryl)serine.

Belongs to the acyl carrier protein (ACP) family. 4'-phosphopantetheine is transferred from CoA to a specific serine of apo-ACP by AcpS. This modification is essential for activity because fatty acids are bound in thioester linkage to the sulfhydryl of the prosthetic group.

The protein resides in the cytoplasm. The protein operates within lipid metabolism; fatty acid biosynthesis. Functionally, carrier of the growing fatty acid chain in fatty acid biosynthesis. This chain is Acyl carrier protein, found in Desulfovibrio desulfuricans (strain ATCC 27774 / DSM 6949 / MB).